Reading from the N-terminus, the 115-residue chain is Thrombospondin type-1 domain-containing protein 8 (115 aa).

A signal peptide spans 1–21 (MARTPGALLLAPLLLLQLATP). One can recognise a TSP type-1 domain in the interval 53–104 (DSILGPWGKWRCLCDLGKQERSREVVGTAPGPVFMDPEKLIQLRPCRQRDCP).

This chain is Thrombospondin type-1 domain-containing protein 8, found in Homo sapiens (Human).